We begin with the raw amino-acid sequence, 262 residues long: Small ribosomal subunit protein eS1 (262 aa).

It belongs to the eukaryotic ribosomal protein eS1 family. In terms of assembly, component of the small ribosomal subunit. Mature ribosomes consist of a small (40S) and a large (60S) subunit. The 40S subunit contains about 33 different proteins and 1 molecule of RNA (18S). The 60S subunit contains about 49 different proteins and 3 molecules of RNA (25S, 5.8S and 5S).

The protein resides in the cytoplasm. The chain is Small ribosomal subunit protein eS1 from Brassica campestris (Field mustard).